Reading from the N-terminus, the 968-residue chain is Glycine dehydrogenase (decarboxylating) (968 aa).

Lysine 712 bears the N6-(pyridoxal phosphate)lysine mark.

Belongs to the GcvP family. In terms of assembly, the glycine cleavage system is composed of four proteins: P, T, L and H. It depends on pyridoxal 5'-phosphate as a cofactor.

The catalysed reaction is N(6)-[(R)-lipoyl]-L-lysyl-[glycine-cleavage complex H protein] + glycine + H(+) = N(6)-[(R)-S(8)-aminomethyldihydrolipoyl]-L-lysyl-[glycine-cleavage complex H protein] + CO2. Its function is as follows. The glycine cleavage system catalyzes the degradation of glycine. The P protein binds the alpha-amino group of glycine through its pyridoxal phosphate cofactor; CO(2) is released and the remaining methylamine moiety is then transferred to the lipoamide cofactor of the H protein. The sequence is that of Glycine dehydrogenase (decarboxylating) from Prochlorococcus marinus (strain NATL2A).